The chain runs to 164 residues: NADH-quinone oxidoreductase subunit I (164 aa).

2 4Fe-4S ferredoxin-type domains span residues Leu55–Glu85 and Thr95–Asn124. [4Fe-4S] cluster-binding residues include Cys65, Cys68, Cys71, Cys75, Cys104, Cys107, Cys110, and Cys114.

This sequence belongs to the complex I 23 kDa subunit family. NDH-1 is composed of 14 different subunits. Subunits NuoA, H, J, K, L, M, N constitute the membrane sector of the complex. Requires [4Fe-4S] cluster as cofactor.

It localises to the cell inner membrane. It carries out the reaction a quinone + NADH + 5 H(+)(in) = a quinol + NAD(+) + 4 H(+)(out). In terms of biological role, NDH-1 shuttles electrons from NADH, via FMN and iron-sulfur (Fe-S) centers, to quinones in the respiratory chain. The immediate electron acceptor for the enzyme in this species is believed to be ubiquinone. Couples the redox reaction to proton translocation (for every two electrons transferred, four hydrogen ions are translocated across the cytoplasmic membrane), and thus conserves the redox energy in a proton gradient. This chain is NADH-quinone oxidoreductase subunit I, found in Roseobacter denitrificans (strain ATCC 33942 / OCh 114) (Erythrobacter sp. (strain OCh 114)).